A 110-amino-acid chain; its full sequence is Large ribosomal subunit protein uL24 (110 aa).

Belongs to the universal ribosomal protein uL24 family. In terms of assembly, part of the 50S ribosomal subunit.

Its function is as follows. One of two assembly initiator proteins, it binds directly to the 5'-end of the 23S rRNA, where it nucleates assembly of the 50S subunit. Functionally, one of the proteins that surrounds the polypeptide exit tunnel on the outside of the subunit. The polypeptide is Large ribosomal subunit protein uL24 (Chloroflexus aggregans (strain MD-66 / DSM 9485)).